Reading from the N-terminus, the 438-residue chain is Coenzyme A disulfide reductase (438 aa).

8–33 (GAVAGGATCASQIRRLDKESDIIIFE) contributes to the FAD binding site. Positions 15, 19, 22, 39, and 42 each coordinate substrate. The Nucleophile role is filled by C43. C43 (redox-active) is an active-site residue. A substrate-binding site is contributed by K71. 151 to 166 (VLVIGAGYVSLEVLEN) is an NADP(+) binding site. 267-277 (TNVPNIYAIGD) is an FAD binding site. H299 is a substrate binding site. Y419 serves as a coordination point for FAD. K427 serves as a coordination point for substrate.

It belongs to the class-III pyridine nucleotide-disulfide oxidoreductase family. Homodimer. It depends on FAD as a cofactor.

It carries out the reaction NADP(+) + 2 CoA = CoA-disulfide + NADPH + H(+). In terms of biological role, catalyzes specifically the NADPH-dependent reduction of coenzyme A disulfide. This is Coenzyme A disulfide reductase from Staphylococcus aureus (strain JH1).